We begin with the raw amino-acid sequence, 1425 residues long: Neuropathy target esterase sws (1425 aa).

Residues 1 to 34 lie on the Lumenal side of the membrane; the sequence is MDVLEMLRASASGSYNTIFSDAWCQYVSKQITAT. The helical transmembrane segment at 35–55 threads the bilayer; it reads VYMYFALVMMSLLFIAWFLYF. The Cytoplasmic segment spans residues 56-1425; the sequence is KRMARLRLRD…RSSPNNETKN (1370 aa). Position 174 to 301 (174 to 301) interacts with a nucleoside 3',5'-cyclic phosphate; it reads IFGHFEKPVF…IRVIQVIMIR (128 aa). Composition is skewed to polar residues over residues 332 to 348 and 357 to 366; these read TMSGPINSQTSQSSRQA and SQMNLMQSAV. The tract at residues 332-410 is disordered; that stretch reads TMSGPINSQT…NPDGSFHGTT (79 aa). A compositionally biased stretch (low complexity) spans 367–381; it reads SGTGSSGVSVTVTRP. S444 and S453 each carry phosphoserine. A nucleoside 3',5'-cyclic phosphate is bound by residues 482 to 609 and 598 to 727; these read ELGL…VVRR and IVLD…HRFL. One can recognise a PNPLA domain in the interval 952–1118; the sequence is LVLGGGGARG…VNNLPADVMH (167 aa). Positions 956 to 961 match the GXGXXG motif; that stretch reads GGGARG. A GXSXG motif is present at residues 983–987; it reads GVSIG. S985 serves as the catalytic Nucleophile. Residue D1105 is the Proton acceptor of the active site. The DGA/G signature appears at 1105–1107; sequence DGG. Phosphoserine is present on S1160. Positions 1330-1425 are disordered; the sequence is LERKTDKSTQ…RSSPNNETKN (96 aa). Residues 1337–1347 show a composition bias toward low complexity; sequence STQSSPPSNSR. Residues 1348–1358 show a composition bias toward basic and acidic residues; that stretch reads SDMRGKEEARH. Positions 1380-1403 are enriched in low complexity; it reads TKTQTGQEQELQQEQQDQGATAEQ. Over residues 1404 to 1416 the composition is skewed to basic and acidic residues; sequence LVDKDKEENKENR.

Belongs to the NTE family. In terms of assembly, interacts with Pka-C3; interaction inhibits the catalytic function of Pka-C3 and the esterase activity of sws. As to expression, isoform A and isoform B are expressed in the entire brain cortex; cortical cell bodies of adult brain. Sws and Pka-C3 are colocalized in all neurons.

The protein localises to the endoplasmic reticulum membrane. The enzyme catalyses a 1-acyl-sn-glycero-3-phosphocholine + H2O = sn-glycerol 3-phosphocholine + a fatty acid + H(+). In terms of biological role, phospholipase B that deacylates intracellular phosphatidylcholine (PtdCho), generating glycerophosphocholine (GroPtdCho). This deacylation occurs at both sn-2 and sn-1 positions of PtdCho. Its specific chemical modification by certain organophosphorus (OP) compounds leads to distal axonopathy. Plays a role in the signaling mechanism between neurons and glia that regulates glia wrapping during development of the adult brain. Essential for membrane lipid homeostasis and cell survival in both neurons and glia of the adult brain. The polypeptide is Neuropathy target esterase sws (sws) (Drosophila melanogaster (Fruit fly)).